The chain runs to 1270 residues: Microtubule-associated tumor suppressor 1 (1270 aa).

Acidic residues predominate over residues 1–14 (MTDDNSDDKIEDEL). 2 disordered regions span residues 1–50 (MTDD…NSAN) and 184–236 (FHTA…VTPS). Residues 38–50 (NSSASSVNWNSAN) show a composition bias toward low complexity. Phosphothreonine is present on threonine 186. The segment covering 197-211 (SGSTSSLSYSTWTSS) has biased composition (low complexity). Basic and acidic residues predominate over residues 212–228 (HSDKTHARETTYDRESF). A phosphoserine mark is found at serine 381, serine 399, and serine 443. Disordered regions lie at residues 524–560 (DAALSKVTPRPQQTSASSPSSVNSRQQTVLSRTPRSD) and 592–622 (THSKNASHRVPRTTSAVKSNQEDVDKASSSN). The segment covering 533–556 (RPQQTSASSPSSVNSRQQTVLSRT) has biased composition (polar residues). Phosphoserine is present on serine 629. 3 stretches are compositionally biased toward polar residues: residues 701 to 710 (SKTTTTSGRN), 759 to 776 (VSSSGKPTSLKTAQSSWV), and 797 to 815 (TGSTPSIASTHSELSTYSN). Residues 701-815 (SKTTTTSGRN…THSELSTYSN (115 aa)) form a disordered region. Residues 940–1231 (IQHLLSEREE…RLSMENEELL (292 aa)) are a coiled coil. Phosphoserine is present on residues serine 1203, serine 1224, serine 1245, serine 1255, serine 1259, serine 1261, serine 1264, and serine 1268. The interval 1237–1270 (GDLCSPKRSPTSSAIPLQSPRNSGSFPSPSISPR) is disordered. Over residues 1244 to 1270 (RSPTSSAIPLQSPRNSGSFPSPSISPR) the composition is skewed to polar residues.

This sequence belongs to the MTUS1 family. As to quaternary structure, homodimer. Interacts with AGTR2. Interacts with PTPN6. Isoform 1 associates with microtubules. In terms of tissue distribution, ubiquitously expressed (at protein level). Highly expressed in brain. Down-regulated in ovarian carcinoma, pancreas carcinoma, colon carcinoma and head and neck squamous cell carcinoma (HNSCC). Isoform 1 is the major isoform in most peripheral tissues. Isoform 2 is abundant in most peripheral tissues. Isoform 3 is the major isoform in brain, female reproductive tissues, thyroid and heart. Within brain it is highly expressed in corpus callosum and pons. Isoform 6 is brain-specific, it is the major isoform in cerebellum and fetal brain.

It localises to the mitochondrion. The protein resides in the golgi apparatus. It is found in the cell membrane. The protein localises to the nucleus. Its subcellular location is the cytoplasm. It localises to the cytoskeleton. The protein resides in the microtubule organizing center. It is found in the centrosome. The protein localises to the spindle. Cooperates with AGTR2 to inhibit ERK2 activation and cell proliferation. May be required for AGTR2 cell surface expression. Together with PTPN6, induces UBE2V2 expression upon angiotensin-II stimulation. Isoform 1 inhibits breast cancer cell proliferation, delays the progression of mitosis by prolonging metaphase and reduces tumor growth. The polypeptide is Microtubule-associated tumor suppressor 1 (MTUS1) (Homo sapiens (Human)).